We begin with the raw amino-acid sequence, 435 residues long: Probable exopolygalacturonase B (435 aa).

The first 15 residues, 1–15 (MKFFLATLFASAVSS), serve as a signal peptide directing secretion. N-linked (GlcNAc...) asparagine glycosylation is found at Asn-59, Asn-184, and Asn-224. 5 PbH1 repeats span residues 208–239 (SKDVSFDDVYIHAFSTNKSALPKNSDGFDSLN), 240–261 (VDGLTVTNTRVDVGDDCFSPKP), 262–283 (NTTNIFVQNLLCNNTHGVSMGS), 294–315 (IEHAYIENVTLLNGQNGARLKA), and 326–347 (INNITYKNIRIENTDAPVVLDQ). Asp-254 serves as the catalytic Proton donor. Cys-256 and Cys-273 are joined by a disulfide. Asn-262 and Asn-274 each carry an N-linked (GlcNAc...) asparagine glycan. The active site involves His-277. Residues Asn-301, Asn-328, Asn-365, and Asn-373 are each glycosylated (N-linked (GlcNAc...) asparagine). The stretch at 366 to 388 (VTNILFENISGTSSGKNGKVVAD) is one PbH1 6 repeat. Residues Cys-391 and Cys-397 are joined by a disulfide bond. Asn-406 is a glycosylation site (N-linked (GlcNAc...) asparagine).

The protein belongs to the glycosyl hydrolase 28 family.

Its subcellular location is the secreted. It catalyses the reaction [(1-&gt;4)-alpha-D-galacturonosyl](n) + H2O = alpha-D-galacturonate + [(1-&gt;4)-alpha-D-galacturonosyl](n-1). Functionally, specific in hydrolyzing the terminal glycosidic bond of polygalacturonic acid and oligogalacturonates. The polypeptide is Probable exopolygalacturonase B (pgxB) (Aspergillus oryzae (strain ATCC 42149 / RIB 40) (Yellow koji mold)).